The sequence spans 370 residues: Calcium-binding protein 1 (370 aa).

The tract at residues 1 to 198 is disordered; that stretch reads MGGGDGAAFK…GRGDSVPAAA (198 aa). Gly-2 carries the N-myristoyl glycine lipid modification. A lipid anchor (S-palmitoyl cysteine) is attached at Gly-4. 3 stretches are compositionally biased toward low complexity: residues 50–61, 68–84, and 148–157; these read HASAGPAAMSSH, KTSLLKAAAAAASGGSR, and ALPAAASRPS. 4 EF-hand domains span residues 225 to 260, 279 to 296, 302 to 337, and 339 to 370; these read EEIEELREAFREFDKDKDGYINCRDLGNCMRTMGYM, GHVDFDDFVELMGPKLLA, IGVKELRDAFREFDTNGDGEISTSELREAMRKLLGH, and VGHRDIEEIIRDVDLNGDGRVDFEEFVRMMSR. Ca(2+) is bound by residues Asp-238, Asp-240, Asp-242, Tyr-244, and Asp-249. Positions 238, 240, 242, and 244 each coordinate Mg(2+). Residues Asp-315, Asn-317, Asp-319, and Glu-321 each contribute to the Ca(2+) site. The residue at position 323 (Ser-323) is a Phosphoserine. 9 residues coordinate Ca(2+): Glu-326, Asp-352, Leu-353, Asn-354, Asp-356, Gly-357, Arg-358, Asp-360, and Glu-363.

Homodimer; when bound to calcium or magnesium. Interacts (via C-terminus) with ITPR1, ITPR2 and ITPR3. This binding is calcium dependent and the interaction correlates with calcium concentration. An additional calcium-independent interaction with the N-terminus of ITPR1 results in a decreased InsP(3) binding to the receptor. Interacts with CACNA1A (via C-terminal CDB motif) in the pre- and postsynaptic membranes. Interacts with CACNA1C (via C-terminal C and IQ motifs). The binding to the C motif is calcium independent whereas the binding to IQ requires the presence of calcium and is mutually exclusive with calmodulin binding. Interacts with CACNA1D. Interacts with TRPC5 (via C-terminus). Interacts (via EF-hands 1 and 2) at microtubules with MAP1LC3B. Interacts with MYO1C. Interacts (via EF-hands 1 and 2) with NSMF (via the central NLS-containing motif region), the interaction occurs in a calcium dependent manner after synaptic NMDA receptor stimulation and prevents nuclear import of NSMF. Interacts with SPACA9. Phosphorylated. The phosphorylation regulates the activity. Retina and brain. Somatodendritic compartment of neurons. Calbrain was found exclusively in brain where it is abundant in the hippocampus, habenular area in the epithalamus and in the cerebellum.

It localises to the cytoplasm. Its subcellular location is the cytoskeleton. It is found in the perinuclear region. The protein localises to the cell membrane. The protein resides in the golgi apparatus. It localises to the postsynaptic density. Its subcellular location is the cell cortex. In terms of biological role, modulates calcium-dependent activity of inositol 1,4,5-triphosphate receptors (ITPRs). Inhibits agonist-induced intracellular calcium signaling. Enhances inactivation and does not support calcium-dependent facilitation of voltage-dependent P/Q-type calcium channels. Causes calcium-dependent facilitation and inhibits inactivation of L-type calcium channels by binding to the same sites as calmodulin in the C-terminal domain of CACNA1C, but has an opposite effect on channel function. Suppresses the calcium-dependent inactivation of CACNA1D. Inhibits TRPC5 channels. Prevents NMDA receptor-induced cellular degeneration. Required for the normal transfer of light signals through the retina. The sequence is that of Calcium-binding protein 1 (CABP1) from Homo sapiens (Human).